A 596-amino-acid chain; its full sequence is UDP-glucuronate:xylan alpha-glucuronosyltransferase 2 (596 aa).

Residues 17–37 (LIRFNLVLLGFSFLLYTAIFF) form a helical; Signal-anchor for type II membrane protein membrane-spanning segment. 2 residues coordinate Mn(2+): Asp395 and Asp397. Substrate is bound by residues 395-397 (DAD), 424-426 (NSG), 451-455 (NGGDQ), and 504-509 (HYLGWK). Mn(2+) is bound at residue His504.

This sequence belongs to the glycosyltransferase 8 family. Glycogenin subfamily. Mn(2+) is required as a cofactor.

The protein localises to the golgi apparatus membrane. Glycosyltransferase required for the addition of both glucuronic acid and 4-O-methylglucuronic acid branches to xylan in stem cell walls. In association with GUX1, is responsible for almost all of the substitutions of the xylan backbone in stem glucuronoxylan. This is UDP-glucuronate:xylan alpha-glucuronosyltransferase 2 (GUX2) from Arabidopsis thaliana (Mouse-ear cress).